A 1203-amino-acid polypeptide reads, in one-letter code: Cingulin (1203 aa).

The segment at Met-7–Ala-357 is head. Residues Glu-25–Ala-48 are disordered. A ZIM motif is present at residues Ala-48 to Gly-62. An interaction with TJP1/ZO1 region spans residues Ala-54–Val-67. The tract at residues Gly-89–Tyr-127 is disordered. 13 positions are modified to phosphoserine: Ser-95, Ser-96, Ser-135, Ser-137, Ser-140, Ser-155, Ser-165, Ser-214, Ser-217, Ser-258, Ser-276, Ser-338, and Ser-351. The interval Asp-186–Ser-266 is disordered. Basic and acidic residues predominate over residues Glu-207–Ser-231. Polar residues predominate over residues Thr-232–Ser-266. Positions Val-358 to Ala-1160 form a coiled coil. At Lys-579 the chain carries N6-acetyllysine. Residue Thr-712 is modified to Phosphothreonine. 2 disordered regions span residues Leu-1034–Gln-1053 and Lys-1154–Asp-1181. The segment covering Ser-1044 to Gln-1053 has biased composition (low complexity). The tail stretch occupies residues Ser-1161–Cys-1203. Residues Ser-1175, Ser-1176, and Ser-1182 each carry the phosphoserine modification.

It belongs to the cingulin family. Homodimer. Interacts with TJP1/ZO1. Interacts with SPEF1. Localized on the cytoplasmic face of tight junctions of polarized epithelia and some endothelia. Expressed in pancreas, kidney, liver and lung, but not in skeletal muscle, placenta, brain or heart.

It is found in the cell junction. The protein resides in the tight junction. In terms of biological role, probably plays a role in the formation and regulation of the tight junction (TJ) paracellular permeability barrier. The protein is Cingulin of Homo sapiens (Human).